We begin with the raw amino-acid sequence, 720 residues long: Fatty acid oxidation complex subunit alpha (720 aa).

The tract at residues 1-189 is enoyl-CoA hydratase/isomerase; the sequence is MIYQGETLSV…KLGLVDAVVA (189 aa). Asp-296 provides a ligand contact to substrate. A 3-hydroxyacyl-CoA dehydrogenase region spans residues 311–720; it reads QPTKKGVVLG…ESYYTQQVNA (410 aa). NAD(+) is bound by residues Met-324, Asp-343, 400–402, Lys-407, and Ser-429; that span reads VVE. The active-site For 3-hydroxyacyl-CoA dehydrogenase activity is His-450. Asn-453 serves as a coordination point for NAD(+). Substrate-binding residues include Asn-500 and Tyr-660.

In the N-terminal section; belongs to the enoyl-CoA hydratase/isomerase family. The protein in the C-terminal section; belongs to the 3-hydroxyacyl-CoA dehydrogenase family. Heterotetramer of two alpha chains (FadB) and two beta chains (FadA).

It catalyses the reaction a (3S)-3-hydroxyacyl-CoA + NAD(+) = a 3-oxoacyl-CoA + NADH + H(+). It carries out the reaction a (3S)-3-hydroxyacyl-CoA = a (2E)-enoyl-CoA + H2O. The catalysed reaction is a 4-saturated-(3S)-3-hydroxyacyl-CoA = a (3E)-enoyl-CoA + H2O. The enzyme catalyses (3S)-3-hydroxybutanoyl-CoA = (3R)-3-hydroxybutanoyl-CoA. It catalyses the reaction a (3Z)-enoyl-CoA = a 4-saturated (2E)-enoyl-CoA. It carries out the reaction a (3E)-enoyl-CoA = a 4-saturated (2E)-enoyl-CoA. It participates in lipid metabolism; fatty acid beta-oxidation. Functionally, involved in the aerobic and anaerobic degradation of long-chain fatty acids via beta-oxidation cycle. Catalyzes the formation of 3-oxoacyl-CoA from enoyl-CoA via L-3-hydroxyacyl-CoA. It can also use D-3-hydroxyacyl-CoA and cis-3-enoyl-CoA as substrate. This Photobacterium profundum (strain SS9) protein is Fatty acid oxidation complex subunit alpha.